Here is a 414-residue protein sequence, read N- to C-terminus: Diaminopimelate decarboxylase (414 aa).

An N6-(pyridoxal phosphate)lysine modification is found at lysine 52. Pyridoxal 5'-phosphate contacts are provided by residues glycine 231 and 265–268 (EPGR). Substrate contacts are provided by arginine 268, arginine 304, and tyrosine 308. Cysteine 334 serves as the catalytic Proton donor. Positions 335 and 362 each coordinate substrate. Position 362 (tyrosine 362) interacts with pyridoxal 5'-phosphate.

This sequence belongs to the Orn/Lys/Arg decarboxylase class-II family. LysA subfamily. As to quaternary structure, homodimer. The cofactor is pyridoxal 5'-phosphate.

The catalysed reaction is meso-2,6-diaminopimelate + H(+) = L-lysine + CO2. Its pathway is amino-acid biosynthesis; L-lysine biosynthesis via DAP pathway; L-lysine from DL-2,6-diaminopimelate: step 1/1. Its function is as follows. Specifically catalyzes the decarboxylation of meso-diaminopimelate (meso-DAP) to L-lysine. The chain is Diaminopimelate decarboxylase from Neisseria meningitidis serogroup B (strain ATCC BAA-335 / MC58).